The following is a 110-amino-acid chain: UPF0060 membrane protein MMAR_2961 (110 aa).

4 helical membrane passes run 6 to 26 (ILLF…VWQG), 32 to 52 (GLAW…VATL), 61 to 81 (ILAA…MAFD), and 90 to 110 (IVGA…PRAH).

It belongs to the UPF0060 family.

Its subcellular location is the cell membrane. In Mycobacterium marinum (strain ATCC BAA-535 / M), this protein is UPF0060 membrane protein MMAR_2961.